A 318-amino-acid chain; its full sequence is Death effector domain-containing protein (318 aa).

Positions 25 to 103 (SLHRMFDIVG…RHDLLPYVTL (79 aa)) constitute a DED domain. The disordered stretch occupies residues 128-191 (PRALSDPEPR…SVTPDPKEKQ (64 aa)).

In terms of assembly, interacts with CASP8, CASP10, KRT8, KRT18, CASP3 and FADD. Homodimerizes and heterodimerizes with DEDD2. Post-translationally, exists predominantly in a mono- or diubiquitinated form. In terms of tissue distribution, widely expressed with highest levels in testis. Within the testis, highly expressed in germ cells but not expressed in Sertoli cells.

It is found in the cytoplasm. Its subcellular location is the nucleus. It localises to the nucleolus. Its function is as follows. A scaffold protein that directs CASP3 to certain substrates and facilitates their ordered degradation during apoptosis. May also play a role in mediating CASP3 cleavage of KRT18. Regulates degradation of intermediate filaments during apoptosis. May play a role in the general transcription machinery in the nucleus and might be an important regulator of the activity of GTF3C3. Inhibits DNA transcription in vitro. In Rattus norvegicus (Rat), this protein is Death effector domain-containing protein (Dedd).